We begin with the raw amino-acid sequence, 515 residues long: Protein FAM98A (515 aa).

2 disordered regions span residues 297 to 411 (VLMG…YHGG) and 432 to 515 (SGYQ…HYTS). A compositionally biased stretch (basic and acidic residues) spans 302 to 311 (VPDRGGRPNE). Positions 382–395 (WTDGGSASGGGYQD) are enriched in gly residues. The segment covering 444–456 (RYQDGGHHGERGS) has biased composition (basic and acidic residues). Over residues 457 to 481 (GRGGRGGRGGRGGRGSQGGGWGGRG) the composition is skewed to gly residues. A compositionally biased stretch (low complexity) spans 485-501 (YHQGGQFEQHFQHGGYQ). Over residues 502-515 (YSHSGFGQGRHYTS) the composition is skewed to polar residues.

It belongs to the FAM98 family. In terms of assembly, interacts (via N- and C-terminus) with DDX1. Interacts (via N- and C-terminus) with C14orf166. Interacts with FAM98B. Interacts with PLEKHM1 (via N- and C-terminus).

Its function is as follows. Positively stimulates PRMT1-induced protein arginine methylation. Involved in skeletal homeostasis. Positively regulates lysosome peripheral distribution and ruffled border formation in osteoclasts. The chain is Protein FAM98A from Rattus norvegicus (Rat).